The sequence spans 275 residues: 4-hydroxy-3-methylbut-2-enyl diphosphate reductase (275 aa).

Cysteine 12 serves as a coordination point for [4Fe-4S] cluster. Residues histidine 36 and histidine 70 each coordinate (2E)-4-hydroxy-3-methylbut-2-enyl diphosphate. 2 residues coordinate dimethylallyl diphosphate: histidine 36 and histidine 70. Positions 36 and 70 each coordinate isopentenyl diphosphate. Residue cysteine 92 participates in [4Fe-4S] cluster binding. Histidine 120 provides a ligand contact to (2E)-4-hydroxy-3-methylbut-2-enyl diphosphate. Histidine 120 contributes to the dimethylallyl diphosphate binding site. Histidine 120 lines the isopentenyl diphosphate pocket. The active-site Proton donor is the glutamate 122. Residue threonine 158 participates in (2E)-4-hydroxy-3-methylbut-2-enyl diphosphate binding. Residue cysteine 186 coordinates [4Fe-4S] cluster. Residues serine 214, serine 215, asparagine 216, and serine 258 each coordinate (2E)-4-hydroxy-3-methylbut-2-enyl diphosphate. 4 residues coordinate dimethylallyl diphosphate: serine 214, serine 215, asparagine 216, and serine 258. Positions 214, 215, 216, and 258 each coordinate isopentenyl diphosphate.

This sequence belongs to the IspH family. Requires [4Fe-4S] cluster as cofactor.

The catalysed reaction is isopentenyl diphosphate + 2 oxidized [2Fe-2S]-[ferredoxin] + H2O = (2E)-4-hydroxy-3-methylbut-2-enyl diphosphate + 2 reduced [2Fe-2S]-[ferredoxin] + 2 H(+). It carries out the reaction dimethylallyl diphosphate + 2 oxidized [2Fe-2S]-[ferredoxin] + H2O = (2E)-4-hydroxy-3-methylbut-2-enyl diphosphate + 2 reduced [2Fe-2S]-[ferredoxin] + 2 H(+). It functions in the pathway isoprenoid biosynthesis; dimethylallyl diphosphate biosynthesis; dimethylallyl diphosphate from (2E)-4-hydroxy-3-methylbutenyl diphosphate: step 1/1. It participates in isoprenoid biosynthesis; isopentenyl diphosphate biosynthesis via DXP pathway; isopentenyl diphosphate from 1-deoxy-D-xylulose 5-phosphate: step 6/6. In terms of biological role, catalyzes the conversion of 1-hydroxy-2-methyl-2-(E)-butenyl 4-diphosphate (HMBPP) into a mixture of isopentenyl diphosphate (IPP) and dimethylallyl diphosphate (DMAPP). Acts in the terminal step of the DOXP/MEP pathway for isoprenoid precursor biosynthesis. The chain is 4-hydroxy-3-methylbut-2-enyl diphosphate reductase from Campylobacter hominis (strain ATCC BAA-381 / DSM 21671 / CCUG 45161 / LMG 19568 / NCTC 13146 / CH001A).